The sequence spans 334 residues: Glycerol-3-phosphate dehydrogenase [NAD(P)+] (334 aa).

The NADPH site is built by W13, R33, and K106. Sn-glycerol 3-phosphate contacts are provided by K106, G137, and S139. Position 141 (A141) interacts with NADPH. Sn-glycerol 3-phosphate is bound by residues K192, D245, S255, R256, and N257. The active-site Proton acceptor is K192. R256 lines the NADPH pocket. Positions 280 and 282 each coordinate NADPH.

The protein belongs to the NAD-dependent glycerol-3-phosphate dehydrogenase family.

The protein resides in the cytoplasm. It catalyses the reaction sn-glycerol 3-phosphate + NAD(+) = dihydroxyacetone phosphate + NADH + H(+). The enzyme catalyses sn-glycerol 3-phosphate + NADP(+) = dihydroxyacetone phosphate + NADPH + H(+). Its pathway is membrane lipid metabolism; glycerophospholipid metabolism. Catalyzes the reduction of the glycolytic intermediate dihydroxyacetone phosphate (DHAP) to sn-glycerol 3-phosphate (G3P), the key precursor for phospholipid synthesis. The polypeptide is Glycerol-3-phosphate dehydrogenase [NAD(P)+] (Chlamydia trachomatis serovar L2b (strain UCH-1/proctitis)).